The chain runs to 364 residues: MNAVIVDAKRTIFGNQNGLLKPFLPEDLAAPIIRCLSRKLEDQVDEVILGNATGRGGNLARLSALQAGLPLSVPGMTIDRQCGSGLEAVRYACSLIQAGAGTMYIAGGSESSSQSPFSERARFSPDAIGDPDMGIAAEYTAARYSISRSMQDEYALLSHQRSRNAHDEGFYREEVVALGELETDEAFLKTRPIEAIIPRAKPVFDTSSGTVTAANSSGIADGAAALLVMEEEKAAALGLKPVLRFIGSAVSGIHPNFPPAAPVVAIRQLLHTHDVTPDDIDLFEINEAFAVKICVCSQELGIPFSKINVRGGALALGHPYGASGAALVTRLFYEAKRRPDCQYAVAAIGSGGGIGLALLFEVLA.

Cys-82 (acyl-thioester intermediate) is an active-site residue. The active-site Proton acceptor is the His-318.

This sequence belongs to the thiolase-like superfamily. Thiolase family.

In terms of biological role, may be involved in fatty acid metabolism. The polypeptide is Putative acetyl-CoA C-acetyltransferase YhfS (yhfS) (Bacillus subtilis (strain 168)).